A 129-amino-acid polypeptide reads, in one-letter code: MGTSNTQKPQKQVPKRKKYKNLFSLKTKKKRGKKFSKRKKGGTLTLPVIPPKSIFILLKSRNKKIYDRKIIDYKNRSLLQEYIYFTGKIIPKRKTGITTKQQRYLTKAIKTARILGLLPFVKKEKGFFR.

A disordered region spans residues 1-20; that stretch reads MGTSNTQKPQKQVPKRKKYK.

This sequence belongs to the bacterial ribosomal protein bS18 family. As to quaternary structure, part of the 30S ribosomal subunit.

The protein resides in the plastid. It is found in the chloroplast. The polypeptide is Small ribosomal subunit protein bS18c (Stigeoclonium helveticum (Green alga)).